The sequence spans 118 residues: Holo-[acyl-carrier-protein] synthase (118 aa).

Mg(2+) is bound by residues Asp8 and Glu50.

Belongs to the P-Pant transferase superfamily. AcpS family. Mg(2+) is required as a cofactor.

It localises to the cytoplasm. The enzyme catalyses apo-[ACP] + CoA = holo-[ACP] + adenosine 3',5'-bisphosphate + H(+). In terms of biological role, transfers the 4'-phosphopantetheine moiety from coenzyme A to a Ser of acyl-carrier-protein. The chain is Holo-[acyl-carrier-protein] synthase from Leifsonia xyli subsp. xyli (strain CTCB07).